A 376-amino-acid polypeptide reads, in one-letter code: 4-hydroxy-3-methylbut-2-enyl diphosphate reductase (376 aa).

Residue Cys19 coordinates [4Fe-4S] cluster. Residues His48 and His99 each coordinate (2E)-4-hydroxy-3-methylbut-2-enyl diphosphate. Residues His48 and His99 each contribute to the dimethylallyl diphosphate site. His48 and His99 together coordinate isopentenyl diphosphate. Position 121 (Cys121) interacts with [4Fe-4S] cluster. His149 provides a ligand contact to (2E)-4-hydroxy-3-methylbut-2-enyl diphosphate. His149 contributes to the dimethylallyl diphosphate binding site. An isopentenyl diphosphate-binding site is contributed by His149. Catalysis depends on Glu151, which acts as the Proton donor. Thr208 is a binding site for (2E)-4-hydroxy-3-methylbut-2-enyl diphosphate. Cys236 is a [4Fe-4S] cluster binding site. Positions 264, 266, and 307 each coordinate (2E)-4-hydroxy-3-methylbut-2-enyl diphosphate. Dimethylallyl diphosphate contacts are provided by Ser264, Asn266, and Ser307. Isopentenyl diphosphate is bound by residues Ser264, Asn266, and Ser307.

This sequence belongs to the IspH family. The cofactor is [4Fe-4S] cluster.

It catalyses the reaction isopentenyl diphosphate + 2 oxidized [2Fe-2S]-[ferredoxin] + H2O = (2E)-4-hydroxy-3-methylbut-2-enyl diphosphate + 2 reduced [2Fe-2S]-[ferredoxin] + 2 H(+). The enzyme catalyses dimethylallyl diphosphate + 2 oxidized [2Fe-2S]-[ferredoxin] + H2O = (2E)-4-hydroxy-3-methylbut-2-enyl diphosphate + 2 reduced [2Fe-2S]-[ferredoxin] + 2 H(+). The protein operates within isoprenoid biosynthesis; dimethylallyl diphosphate biosynthesis; dimethylallyl diphosphate from (2E)-4-hydroxy-3-methylbutenyl diphosphate: step 1/1. It functions in the pathway isoprenoid biosynthesis; isopentenyl diphosphate biosynthesis via DXP pathway; isopentenyl diphosphate from 1-deoxy-D-xylulose 5-phosphate: step 6/6. Catalyzes the conversion of 1-hydroxy-2-methyl-2-(E)-butenyl 4-diphosphate (HMBPP) into a mixture of isopentenyl diphosphate (IPP) and dimethylallyl diphosphate (DMAPP). Acts in the terminal step of the DOXP/MEP pathway for isoprenoid precursor biosynthesis. The protein is 4-hydroxy-3-methylbut-2-enyl diphosphate reductase of Treponema pallidum (strain Nichols).